The sequence spans 176 residues: bZIP transcription factor 8 (176 aa).

The disordered stretch occupies residues 44-101; sequence PNTSGGSDESMSDGSKIDPKRSPKYLEKRMKNNEAAKKSRASRKHREQKNQTENELLK. Residues 47 to 57 are compositionally biased toward low complexity; that stretch reads SGGSDESMSDG. Basic and acidic residues predominate over residues 58 to 80; that stretch reads SKIDPKRSPKYLEKRMKNNEAAK. The bZIP domain occupies 65 to 128; sequence SPKYLEKRMK…AQMQITIRDM (64 aa). Residues 67 to 92 are basic motif; sequence KYLEKRMKNNEAAKKSRASRKHREQK. The span at 81 to 90 shows a compositional bias: basic residues; sequence KSRASRKHRE. Basic and acidic residues predominate over residues 91-101; the sequence is QKNQTENELLK. The interval 100 to 107 is leucine-zipper; sequence LKRKNAAL.

It belongs to the bZIP family.

This Caenorhabditis elegans protein is bZIP transcription factor 8 (zip-8).